A 290-amino-acid polypeptide reads, in one-letter code: Nucleotide-binding protein Sde_3181 (290 aa).

Residue 8–15 coordinates ATP; that stretch reads GRSGSGKT. Residue 60 to 63 participates in GTP binding; sequence DARN.

Belongs to the RapZ-like family.

Functionally, displays ATPase and GTPase activities. This is Nucleotide-binding protein Sde_3181 from Saccharophagus degradans (strain 2-40 / ATCC 43961 / DSM 17024).